Reading from the N-terminus, the 209-residue chain is Ribosome maturation factor RimM (209 aa).

The region spanning 103-178 (EGATYVSDLV…RIEMVLPQGM (76 aa)) is the PRC barrel domain. The segment at 184–209 (PLSKAEKERQKSEADETREAGERRKR) is disordered. Basic and acidic residues predominate over residues 187–209 (KAEKERQKSEADETREAGERRKR).

It belongs to the RimM family. Binds ribosomal protein uS19.

Its subcellular location is the cytoplasm. Functionally, an accessory protein needed during the final step in the assembly of 30S ribosomal subunit, possibly for assembly of the head region. Essential for efficient processing of 16S rRNA. May be needed both before and after RbfA during the maturation of 16S rRNA. It has affinity for free ribosomal 30S subunits but not for 70S ribosomes. In Koribacter versatilis (strain Ellin345), this protein is Ribosome maturation factor RimM.